The primary structure comprises 381 residues: Probable tRNA sulfurtransferase (381 aa).

The 109-residue stretch at 68 to 176 (DLALKLLKKV…NDGAYIFTEK (109 aa)) folds into the THUMP domain. Residues 194 to 195 (LI), Lys-276, Gly-298, and Gln-307 contribute to the ATP site.

The protein belongs to the ThiI family.

It is found in the cytoplasm. The catalysed reaction is [ThiI sulfur-carrier protein]-S-sulfanyl-L-cysteine + a uridine in tRNA + 2 reduced [2Fe-2S]-[ferredoxin] + ATP + H(+) = [ThiI sulfur-carrier protein]-L-cysteine + a 4-thiouridine in tRNA + 2 oxidized [2Fe-2S]-[ferredoxin] + AMP + diphosphate. The enzyme catalyses [ThiS sulfur-carrier protein]-C-terminal Gly-Gly-AMP + S-sulfanyl-L-cysteinyl-[cysteine desulfurase] + AH2 = [ThiS sulfur-carrier protein]-C-terminal-Gly-aminoethanethioate + L-cysteinyl-[cysteine desulfurase] + A + AMP + 2 H(+). The protein operates within cofactor biosynthesis; thiamine diphosphate biosynthesis. Its function is as follows. Catalyzes the ATP-dependent transfer of a sulfur to tRNA to produce 4-thiouridine in position 8 of tRNAs, which functions as a near-UV photosensor. Also catalyzes the transfer of sulfur to the sulfur carrier protein ThiS, forming ThiS-thiocarboxylate. This is a step in the synthesis of thiazole, in the thiamine biosynthesis pathway. The sulfur is donated as persulfide by IscS. The protein is Probable tRNA sulfurtransferase of Methanocaldococcus jannaschii (strain ATCC 43067 / DSM 2661 / JAL-1 / JCM 10045 / NBRC 100440) (Methanococcus jannaschii).